The sequence spans 156 residues: Snaclec rhinocetin subunit alpha (156 aa).

The N-terminal stretch at 1-23 is a signal peptide; sequence MGRFIFLSSGWLVVFLSLSGTGA. 3 disulfides stabilise this stretch: Cys-27–Cys-38, Cys-55–Cys-150, and Cys-125–Cys-142. The region spanning 34 to 151 is the C-type lectin domain; that stretch reads YEGHCYKFFF…CGDNYPFVCM (118 aa).

The protein belongs to the snaclec family. Heterodimer; disulfide-linked. As to expression, expressed by the venom gland.

Its subcellular location is the secreted. Its function is as follows. Antagonist of the alpha-2 subunit of the integrin alpha-2/beta-1 (ITGA2/ITGB1) on human platelets and endothelial cells. This protein inhibits collagen-stimulated activation of human platelets in a dose-dependent manner. In addition, it antagonizes the binding of monoclonal antibodies against the alpha-2 subunit of integrin alpha-2/beta-1 to platelets and it coimmunoprecipitates with this integrin. The sequence is that of Snaclec rhinocetin subunit alpha from Bitis rhinoceros (West African gaboon viper).